The sequence spans 737 residues: MSVRNNSAITPELIAHHGLKIDEYQRILELIGREPTFTELGIFSAMWNEHCSYKSSKKWLKTLPTKGKCVIQGPGENAGVVDIGNGQCVVFKMESHNHPSYIEPYQGAATGIGGILRDIFTMGARPVAAINALRFGSPDHPRTRHLVSGVVSGIGGYSNAFGVPTVGGEVNFDKRYNGNILVNAFAAGIAKIDSIFYSKAQGVGLPVVYLGAKTGRDGVGGATMASAEFDDAIDEKRPTVQVGDPFTEKCLLEACLELMALKAVIAIQDMGAAGLTSSSVEMGAKGNLGIELNLDKIPVREENMTAYEIMLSESQERMLMVLKPEMEKQAAAIFHKWGLDFSIIGKTTDDLRFRVLHQGKEVVNLPIKELGDEAPVYDRPWIAPSPKAILKAEEVKEIENFGDALLTLLNSADQSSRRWVYEQYDTFIQGNSLVRPGGDAGVIRVDNNDKHALAFSSDVTPRYCEADPYEGGKQAVAECWRNISATGATPLAATDNLNFGNPEKPEIMGQLVFAIKGIGEACKELDFPIVSGNVSLYNETNGESILPTPTIAGVGIIDDWLKVVTVGGMQDGDIIILVGPCGSHLGQSIYVRDILNIDTGTPPHVDLQLEKKNGQFVRDVINRGFIHAAHDISDGGLAIALAEMVIKSGKGIRAKLSNISPRHAELFGEDQGRYLIAIKPNALNSLKELSQTNMISLTELGTVEGDALDIKDTLSLSVSQLTQAYESWFPKFMGNST.

His-50 is a catalytic residue. Tyr-53 and Lys-92 together coordinate ATP. Glu-94 contributes to the Mg(2+) binding site. Residues 95-98 (SHNH) and Arg-117 contribute to the substrate site. The active-site Proton acceptor is His-96. Position 118 (Asp-118) interacts with Mg(2+). Gln-241 is a substrate binding site. Asp-269 provides a ligand contact to Mg(2+). 313-315 (ESQ) contributes to the substrate binding site. ATP contacts are provided by Asp-495 and Gly-532. Asn-533 serves as a coordination point for Mg(2+). A substrate-binding site is contributed by Ser-535.

It belongs to the FGAMS family. Monomer. Part of the FGAM synthase complex composed of 1 PurL, 1 PurQ and 2 PurS subunits.

The protein localises to the cytoplasm. It catalyses the reaction N(2)-formyl-N(1)-(5-phospho-beta-D-ribosyl)glycinamide + L-glutamine + ATP + H2O = 2-formamido-N(1)-(5-O-phospho-beta-D-ribosyl)acetamidine + L-glutamate + ADP + phosphate + H(+). The protein operates within purine metabolism; IMP biosynthesis via de novo pathway; 5-amino-1-(5-phospho-D-ribosyl)imidazole from N(2)-formyl-N(1)-(5-phospho-D-ribosyl)glycinamide: step 1/2. Part of the phosphoribosylformylglycinamidine synthase complex involved in the purines biosynthetic pathway. Catalyzes the ATP-dependent conversion of formylglycinamide ribonucleotide (FGAR) and glutamine to yield formylglycinamidine ribonucleotide (FGAM) and glutamate. The FGAM synthase complex is composed of three subunits. PurQ produces an ammonia molecule by converting glutamine to glutamate. PurL transfers the ammonia molecule to FGAR to form FGAM in an ATP-dependent manner. PurS interacts with PurQ and PurL and is thought to assist in the transfer of the ammonia molecule from PurQ to PurL. The protein is Phosphoribosylformylglycinamidine synthase subunit PurL of Bartonella bacilliformis (strain ATCC 35685 / KC583 / Herrer 020/F12,63).